A 320-amino-acid polypeptide reads, in one-letter code: Ferrochelatase (320 aa).

Fe cation contacts are provided by H194 and E275.

It belongs to the ferrochelatase family. As to quaternary structure, monomer.

The protein resides in the cytoplasm. It carries out the reaction heme b + 2 H(+) = protoporphyrin IX + Fe(2+). It functions in the pathway porphyrin-containing compound metabolism; protoheme biosynthesis; protoheme from protoporphyrin-IX: step 1/1. Its function is as follows. Catalyzes the ferrous insertion into protoporphyrin IX. This is Ferrochelatase from Escherichia coli O8 (strain IAI1).